Consider the following 443-residue polypeptide: Phosphoglucosamine mutase (443 aa).

S101 serves as the catalytic Phosphoserine intermediate. S101, D239, D241, and D243 together coordinate Mg(2+). S101 carries the post-translational modification Phosphoserine.

It belongs to the phosphohexose mutase family. It depends on Mg(2+) as a cofactor. In terms of processing, activated by phosphorylation.

The catalysed reaction is alpha-D-glucosamine 1-phosphate = D-glucosamine 6-phosphate. Its function is as follows. Catalyzes the conversion of glucosamine-6-phosphate to glucosamine-1-phosphate. The polypeptide is Phosphoglucosamine mutase (Francisella tularensis subsp. novicida (strain U112)).